The sequence spans 188 residues: Elongation factor P (188 aa).

The protein belongs to the elongation factor P family.

The protein localises to the cytoplasm. Its pathway is protein biosynthesis; polypeptide chain elongation. In terms of biological role, involved in peptide bond synthesis. Stimulates efficient translation and peptide-bond synthesis on native or reconstituted 70S ribosomes in vitro. Probably functions indirectly by altering the affinity of the ribosome for aminoacyl-tRNA, thus increasing their reactivity as acceptors for peptidyl transferase. This Pseudomonas aeruginosa (strain LESB58) protein is Elongation factor P.